A 105-amino-acid polypeptide reads, in one-letter code: Replication restart protein PriB (105 aa).

One can recognise an SSB domain in the interval Met1–Asp102.

It belongs to the PriB family. In terms of assembly, homodimer. Interacts with PriA and DnaT. Component of the replication restart primosome. Primosome assembly occurs via a 'hand-off' mechanism. PriA binds to replication forks, subsequently PriB then DnaT bind; DnaT then displaces ssDNA to generate the helicase loading substrate.

Functionally, involved in the restart of stalled replication forks, which reloads the replicative helicase on sites other than the origin of replication; the PriA-PriB pathway is the major replication restart pathway. During primosome assembly it facilitates complex formation between PriA and DnaT on DNA; stabilizes PriA on DNA. Stimulates the DNA unwinding activity of PriA helicase. In Serratia proteamaculans (strain 568), this protein is Replication restart protein PriB.